We begin with the raw amino-acid sequence, 312 residues long: Ribonuclease Z (312 aa).

The Zn(2+) site is built by His-61, His-63, Asp-65, His-66, His-148, Asp-216, and His-275. Asp-65 (proton acceptor) is an active-site residue.

Belongs to the RNase Z family. As to quaternary structure, homodimer. Requires Zn(2+) as cofactor.

It carries out the reaction Endonucleolytic cleavage of RNA, removing extra 3' nucleotides from tRNA precursor, generating 3' termini of tRNAs. A 3'-hydroxy group is left at the tRNA terminus and a 5'-phosphoryl group is left at the trailer molecule.. In terms of biological role, zinc phosphodiesterase, which displays some tRNA 3'-processing endonuclease activity. Probably involved in tRNA maturation, by removing a 3'-trailer from precursor tRNA. The protein is Ribonuclease Z of Clostridium tetani (strain Massachusetts / E88).